The sequence spans 374 residues: Aminomethyltransferase (374 aa).

The protein belongs to the GcvT family. In terms of assembly, the glycine cleavage system is composed of four proteins: P, T, L and H.

The enzyme catalyses N(6)-[(R)-S(8)-aminomethyldihydrolipoyl]-L-lysyl-[protein] + (6S)-5,6,7,8-tetrahydrofolate = N(6)-[(R)-dihydrolipoyl]-L-lysyl-[protein] + (6R)-5,10-methylene-5,6,7,8-tetrahydrofolate + NH4(+). In terms of biological role, the glycine cleavage system catalyzes the degradation of glycine. The polypeptide is Aminomethyltransferase (Caldanaerobacter subterraneus subsp. tengcongensis (strain DSM 15242 / JCM 11007 / NBRC 100824 / MB4) (Thermoanaerobacter tengcongensis)).